The chain runs to 247 residues: Carboxy-S-adenosyl-L-methionine synthase (247 aa).

Residues Tyr39, 64-66 (GCS), 89-90 (DN), 117-118 (DI), Asn132, and Arg199 contribute to the S-adenosyl-L-methionine site.

The protein belongs to the class I-like SAM-binding methyltransferase superfamily. Cx-SAM synthase family. As to quaternary structure, homodimer.

The catalysed reaction is prephenate + S-adenosyl-L-methionine = carboxy-S-adenosyl-L-methionine + 3-phenylpyruvate + H2O. In terms of biological role, catalyzes the conversion of S-adenosyl-L-methionine (SAM) to carboxy-S-adenosyl-L-methionine (Cx-SAM). The protein is Carboxy-S-adenosyl-L-methionine synthase of Cronobacter sakazakii (strain ATCC BAA-894) (Enterobacter sakazakii).